The following is a 492-amino-acid chain: Glycylpeptide N-tetradecanoyltransferase 2 (492 aa).

The interval 1-77 (MAEDSESAAS…SASDSQEIKN (77 aa)) is disordered. A compositionally biased stretch (acidic residues) spans 15–32 (ELDDQDTCGIDGDNEEEN). Residues 46–57 (KKKKKKQKRKKE) are compositionally biased toward basic residues. Positions 61–72 (SGGTKSDSASDS) are enriched in polar residues. Tetradecanoyl-CoA-binding residues include His111, Trp116, Leu244, Val246, Ser252, Arg254, Val255, and Ala256.

Belongs to the NMT family.

Its subcellular location is the cytoplasm. The protein resides in the membrane. The enzyme catalyses N-terminal glycyl-[protein] + tetradecanoyl-CoA = N-tetradecanoylglycyl-[protein] + CoA + H(+). It catalyses the reaction N-terminal glycyl-L-lysyl-[protein] + tetradecanoyl-CoA = N-terminal glycyl-(N(6)-tetradecanoyl)-L-lysyl-[protein] + CoA + H(+). Functionally, adds a myristoyl group to the N-terminal glycine residue of certain cellular and viral proteins. Also able to mediate N-terminal lysine myristoylation of proteins. The protein is Glycylpeptide N-tetradecanoyltransferase 2 of Danio rerio (Zebrafish).